Reading from the N-terminus, the 357-residue chain is MAGLFGTTTSTTTSTLGDLKNDVELGSPPEDSITDLSFNPNPNDPKDFLAVSSWDKKVRVYEIAANGQNQGKVQMEHEGPVFAVDFFKDGTKVISAGADKQAKVLDLASGQAMQVAAHDAPIRCVKYFEAGGTPMAVTGSWDKTIKYWDFRSATPAGTVQCQERVYTMDVKENLLVIGTADRYIDVINLKEPVKFYKTLQSPLKWQTRVVSCFTDSQGFAIGSIEGRCAIQYVEDKDQSMNFSFKCHRDTPQNNVTNVHAVNAISFHPQHGTFSTAGSDGTFHFWDKDAKHRLKGYPNVGGSITATKFNRNGTIFAYAISYDWSKGYQGNTANYPTKVMLHPVLGDECKPRPSVKKR.

The disordered stretch occupies residues 1–31 (MAGLFGTTTSTTTSTLGDLKNDVELGSPPED). WD repeat units follow at residues 28-71 (PPED…QNQG), 76-115 (EHEG…AMQV), 117-158 (AHDA…PAGT), 160-197 (QCQE…KFYK), and 256-295 (TNVH…RLKG).

This sequence belongs to the WD repeat rae1 family. As to quaternary structure, component of the nuclear pore complex (NPC). NPC constitutes the exclusive means of nucleocytoplasmic transport. NPCs allow the passive diffusion of ions and small molecules and the active, nuclear transport receptor-mediated bidirectional transport of macromolecules such as proteins, RNAs, ribonucleoparticles (RNPs), and ribosomal subunits across the nuclear envelope. Due to its 8-fold rotational symmetry, all subunits are present with 8 copies or multiples thereof.

It localises to the nucleus. The protein resides in the nuclear pore complex. The protein localises to the nucleus membrane. Functions as a component of the nuclear pore complex (NPC). NPC components, collectively referred to as nucleoporins (NUPs), can play the role of both NPC structural components and of docking or interaction partners for transiently associated nuclear transport factors. It is specifically important for nuclear mRNA export. The sequence is that of mRNA export factor GLE2 (GLE2) from Chaetomium thermophilum (strain DSM 1495 / CBS 144.50 / IMI 039719) (Thermochaetoides thermophila).